The primary structure comprises 86 residues: Weak toxin 2 (86 aa).

An N-terminal signal peptide occupies residues 1–23; that stretch reads MKTLLLTLVVVAIVCLDLGYTLT. 5 cysteine pairs are disulfide-bonded: Cys-24-Cys-45, Cys-27-Cys-32, Cys-38-Cys-63, Cys-67-Cys-78, and Cys-79-Cys-84.

Belongs to the three-finger toxin family. Ancestral subfamily. Orphan group II sub-subfamily. Expressed by the venom gland.

Its subcellular location is the secreted. Binds with low affinity to muscular (alpha-1-beta-1-delta-epsilon/CHRNA1-CHRNB1-CHRND-CHRNE) and very low affinity to neuronal (alpha-7/CHRNA7) nicotinic acetylcholine receptor (nAChR). In Bungarus candidus (Malayan krait), this protein is Weak toxin 2.